The chain runs to 243 residues: MNAADISRAPPGYLEVAWIADTCKLLMGLGWTTNYAGMIYKSLKDRTYGMALMPLCCNFAWELTYAVIYPFGSRQDKFTHYFGLMLNCGVMYTAVKNAEREWTHAPLVRRNLPFIFIICIAAWTTAHLALALQIGPSHAQAFSAYGCQLLLSVGALCQLLSRGSSRGASYFLWFCRFFGSLVLIPQDVLRYRYWRQDHEYMGSPLYIWFVSIFLLLDGSYALCLWYVRRFESEQEEAKKAKSI.

A run of 6 helical transmembrane segments spans residues 11–31 (PGYL…GLGW), 51–71 (ALMP…IYPF), 112–132 (LPFI…ALAL), 141–161 (AFSA…QLLS), 169–189 (SYFL…QDVL), and 207–227 (IWFV…LWYV).

This sequence belongs to the paxB family.

It is found in the membrane. The protein operates within secondary metabolite biosynthesis; terpenoid biosynthesis. Functionally, terpene cyclase; part of the gene cluster that mediates the biosynthesis of the diterpenoid pyrones subglutinols A and B. The first step of the pathway is the synthesis of the alpha-pyrone moiety by the polyketide synthase dpmaA via condensation of one acetyl-CoA starter unit with 3 malonyl-CoA units and 2 methylations. The alpha-pyrone is then combined with geranylgeranyl pyrophosphate (GGPP) formed by the GGPP synthase dpmaD through the action of the prenyltransferase dpmaC to yield a linear alpha-pyrone diterpenoid. Subsequent steps in the diterpenoid pyrone biosynthetic pathway involve the decalin core formation, which is initiated by the epoxidation of the C10-C11 olefin by the FAD-dependent oxidoreductase dpmaE, and is followed by a cyclization cascade catalyzed by the terpene cyclase dpmaB. The dehydrogenase dpmaF is then involved in tetrahydrofuran (THF) ring formation at the C5 unit to complete the formation of subglutinols A and B. The polypeptide is Terpene cyclase dpmaB (Metarhizium anisopliae (Entomophthora anisopliae)).